The sequence spans 129 residues: ATP synthase epsilon chain (129 aa).

This sequence belongs to the ATPase epsilon chain family. F-type ATPases have 2 components, CF(1) - the catalytic core - and CF(0) - the membrane proton channel. CF(1) has five subunits: alpha(3), beta(3), gamma(1), delta(1), epsilon(1). CF(0) has three main subunits: a, b and c.

The protein resides in the cell inner membrane. In terms of biological role, produces ATP from ADP in the presence of a proton gradient across the membrane. The sequence is that of ATP synthase epsilon chain from Campylobacter concisus (strain 13826).